Reading from the N-terminus, the 100-residue chain is Cytochrome c2 iso-1 (100 aa).

Heme c contacts are provided by Cys-11, Cys-14, His-15, and Met-76.

Belongs to the cytochrome c family. Post-translationally, binds 1 heme c group covalently per subunit.

Functionally, cytochrome c2 is found mainly in purple, non-sulfur, photosynthetic bacteria where it functions as the electron donor to the oxidized bacteriochlorophyll in the photophosphorylation pathway. However, it may also have a role in the respiratory chain and is found in some non-photosynthetic bacteria. In Magnetospirillum molischianum (Rhodospirillum molischianum), this protein is Cytochrome c2 iso-1.